Here is a 203-residue protein sequence, read N- to C-terminus: Outer-membrane lipoprotein LolB (203 aa).

The signal sequence occupies residues 1–18 (MTLRSFLILLLSSIVLAG). C19 carries N-palmitoyl cysteine lipidation. A lipid anchor (S-diacylglycerol cysteine) is attached at C19.

Belongs to the LolB family. As to quaternary structure, monomer.

The protein localises to the cell outer membrane. Plays a critical role in the incorporation of lipoproteins in the outer membrane after they are released by the LolA protein. This Vibrio campbellii (strain ATCC BAA-1116) protein is Outer-membrane lipoprotein LolB.